A 171-amino-acid polypeptide reads, in one-letter code: Ly6/PLAUR domain-containing protein 6 (171 aa).

The signal sequence occupies residues 1-25 (MEPSPALAWLLLLSLVADCLKAAQS). Residues 47-141 (FKCFTCEKAA…PRNETDATFA (95 aa)) form the UPAR/Ly6 domain. Intrachain disulfides connect Cys-49/Cys-77, Cys-52/Cys-61, Cys-70/Cys-96, Cys-102/Cys-121, Cys-107/Cys-118, and Cys-122/Cys-127. The short motif at 88-90 (NSI) is the NxI motif element. Residues Asn-134 and Asn-147 are each glycosylated (N-linked (GlcNAc...) asparagine). Residue Asn-147 is the site of GPI-anchor amidated asparagine attachment. Residues 148 to 171 (QTNGHPHCVSVIVSCLWVWLGLTL) constitute a propeptide, removed in mature form.

In terms of assembly, interacts with nicotinic acetylcholine receptors (nAChRs) including CHRNA3, CHRNA4, CHRNA5, CHRNA6, CHRNA7, CHRNB2 and CHRNB4. Interacts (via NxI motif) with LRP6. Detected in the frontal cortex and hippocampus (at protein level). Highly expressed in the brain and spinal cord, as well as dorsal root and trigeminal ganglia.

The protein localises to the secreted. The protein resides in the cytoplasm. It is found in the cell membrane. It localises to the synapse. Its subcellular location is the synaptosome. The protein localises to the membrane raft. The protein resides in the cell projection. It is found in the dendrite. It localises to the perikaryon. Functionally, acts as a modulator of nicotinic acetylcholine receptors (nAChRs) function in the brain. Inhibits nicotine-induced Ca(2+) influx through nAChRs. In vitro, specifically inhibits alpha-3:beta-4 and alpha-7 nAChR currents in an allosteric manner. Acts as a positive regulator of Wnt/beta-catenin signaling. The polypeptide is Ly6/PLAUR domain-containing protein 6 (Lypd6) (Mus musculus (Mouse)).